A 297-amino-acid polypeptide reads, in one-letter code: Large ribosomal subunit protein uL18 (297 aa).

Belongs to the universal ribosomal protein uL18 family. In terms of assembly, component of the large ribosomal subunit (LSU).

The protein resides in the cytoplasm. Its subcellular location is the nucleus. Its function is as follows. Component of the ribosome, a large ribonucleoprotein complex responsible for the synthesis of proteins in the cell. The small ribosomal subunit (SSU) binds messenger RNAs (mRNAs) and translates the encoded message by selecting cognate aminoacyl-transfer RNA (tRNA) molecules. The large subunit (LSU) contains the ribosomal catalytic site termed the peptidyl transferase center (PTC), which catalyzes the formation of peptide bonds, thereby polymerizing the amino acids delivered by tRNAs into a polypeptide chain. The nascent polypeptides leave the ribosome through a tunnel in the LSU and interact with protein factors that function in enzymatic processing, targeting, and the membrane insertion of nascent chains at the exit of the ribosomal tunnel. The protein is Large ribosomal subunit protein uL18 (RpL5) of Aedes aegypti (Yellowfever mosquito).